The following is a 206-amino-acid chain: Outer-membrane lipoprotein carrier protein (206 aa).

The first 20 residues, 1–20, serve as a signal peptide directing secretion; sequence MRLIRMLLPVLALTTLTAHA.

This sequence belongs to the LolA family. As to quaternary structure, monomer.

The protein localises to the periplasm. Its function is as follows. Participates in the translocation of lipoproteins from the inner membrane to the outer membrane. Only forms a complex with a lipoprotein if the residue after the N-terminal Cys is not an aspartate (The Asp acts as a targeting signal to indicate that the lipoprotein should stay in the inner membrane). The protein is Outer-membrane lipoprotein carrier protein of Pseudomonas fluorescens (strain Pf0-1).